Consider the following 265-residue polypeptide: RNA polymerase sigma factor SigI2 (265 aa).

The Polymerase core binding signature appears at 71–84 (DEFSVGLAAFNEAI). A DNA-binding region (H-T-H motif) is located at residues 211 to 230 (KTELLKLLKINKKTIERNRT).

This sequence belongs to the sigma-70 factor family. SigI subfamily. As to quaternary structure, interacts with RsgI2.

It is found in the cytoplasm. Negatively regulated by the anti-sigma-I factor RsgI2. Binding of the polysaccharide substrate to RsgI2 may lead to the release and activation of SigI2. Sigma factors are initiation factors that promote the attachment of RNA polymerase to specific initiation sites and are then released. This sigma factor is involved in regulation of cellulosomal genes via an external polysaccharide-sensing mechanism. The protein is RNA polymerase sigma factor SigI2 of Acetivibrio thermocellus (strain ATCC 27405 / DSM 1237 / JCM 9322 / NBRC 103400 / NCIMB 10682 / NRRL B-4536 / VPI 7372) (Clostridium thermocellum).